A 407-amino-acid chain; its full sequence is Protein NIS1 (407 aa).

Positions 41-61 (SNSNSNSNTNSNTNSNTNSNS) are enriched in low complexity. A disordered region spans residues 41-64 (SNSNSNSNTNSNTNSNTNSNSDTK). Phosphoserine occurs at positions 260, 264, 300, and 302. Positions 277–302 (IKQNSTTPTTRSVYNKNVGRSNTSPS) are enriched in polar residues. Residues 277-315 (IKQNSTTPTTRSVYNKNVGRSNTSPSVLYHPKRRGKLNT) form a disordered region. A compositionally biased stretch (basic residues) spans 306–315 (HPKRRGKLNT). The SUMO-binding motif lies at 391 to 398 (IIIPDSQD).

Interacts with CBF2, GIS1, NAP1, PRM8, REI1, SHS1 and SMT3.

It localises to the bud neck. The protein localises to the cytoplasm. The protein resides in the cell cortex. In terms of biological role, may be involved in a mitotic signaling network. Binds sumoylated proteins and may stabilize SUMO chains. This chain is Protein NIS1 (NIS1), found in Saccharomyces cerevisiae (strain ATCC 204508 / S288c) (Baker's yeast).